The following is a 203-amino-acid chain: N-(5'-phosphoribosyl)anthranilate isomerase (203 aa).

Belongs to the TrpF family.

It catalyses the reaction N-(5-phospho-beta-D-ribosyl)anthranilate = 1-(2-carboxyphenylamino)-1-deoxy-D-ribulose 5-phosphate. The protein operates within amino-acid biosynthesis; L-tryptophan biosynthesis; L-tryptophan from chorismate: step 3/5. In Thermoanaerobacter pseudethanolicus (strain ATCC 33223 / 39E) (Clostridium thermohydrosulfuricum), this protein is N-(5'-phosphoribosyl)anthranilate isomerase.